The chain runs to 418 residues: Lactosylceramide alpha-2,3-sialyltransferase (418 aa).

The segment at 1-25 (MRTKAAGCAERRPLQPRTEAAAAPA) is disordered. Residues 1–61 (MRTKAAGCAE…RAQSKMRRPS (61 aa)) lie on the Cytoplasmic side of the membrane. The helical; Signal-anchor for type II membrane protein transmembrane segment at 62–82 (LLLKDILKCTLLVFGVWILYI) threads the bilayer. The Lumenal segment spans residues 83-418 (LKLNYTTEEC…DLSGGIDREF (336 aa)). 3 N-linked (GlcNAc...) asparagine glycosylation sites follow: Asn-86, Asn-236, and Asn-390. Residues Cys-195 and Cys-353 are joined by a disulfide bond.

Belongs to the glycosyltransferase 29 family. In terms of processing, N-glycosylated. Ubiquitous. High expression in brain, skeletal muscle, placenta, and testis. mRNA widely distributed in human brain, but slightly elevated expression was observed in the cerebral cortex, temporal lobe, and putamen.

The protein resides in the golgi apparatus membrane. The enzyme catalyses a beta-D-Gal-(1-&gt;4)-beta-D-Glc-(1&lt;-&gt;1)-Cer(d18:1(4E)) + CMP-N-acetyl-beta-neuraminate = a ganglioside GM3 (d18:1(4E)) + CMP + H(+). It carries out the reaction ganglioside GA2 (d18:1(4E)/18:0) + CMP-N-acetyl-beta-neuraminate = ganglioside GM2 (d18:1(4E)/18:0) + CMP + H(+). It catalyses the reaction a beta-D-Gal-(1&lt;-&gt;1')-ceramide + CMP-N-acetyl-beta-neuraminate = N-acetyl-alpha-neuraminosyl-(2-&gt;3)-beta-D-galactosyl-(1&lt;-&gt;1')-ceramide + CMP + H(+). The catalysed reaction is a beta-D-galactosyl-(1&lt;-&gt;1')-N-acylsphing-4-enine + CMP-N-acetyl-beta-neuraminate = a ganglioside GM4 (d18:1(4E)) + CMP + H(+). The enzyme catalyses ganglioside GA1 (d18:1(4E)/18:0) + CMP-N-acetyl-beta-neuraminate = ganglioside GM1 (d18:1(4E)/18:0) + CMP + H(+). It functions in the pathway glycolipid biosynthesis. In terms of biological role, transfers the sialyl group (N-acetyl-alpha-neuraminyl or NeuAc) from CMP-NeuAc to the non-reducing terminal galactose (Gal) of glycosphingolipids forming gangliosides (important molecules involved in the regulation of multiple cellular processes, including cell proliferation and differentiation, apoptosis, embryogenesis, development, and oncogenesis). Mainly involved in the biosynthesis of ganglioside GM3 but can also use different glycolipids as substrate acceptors such as D-galactosylceramide (GalCer), asialo-GM2 (GA2) and asialo-GM1 (GA1), although less preferentially than beta-D-Gal-(1-&gt;4)-beta-D-Glc-(1&lt;-&gt;1)-Cer (LacCer). The sequence is that of Lactosylceramide alpha-2,3-sialyltransferase (ST3GAL5) from Homo sapiens (Human).